We begin with the raw amino-acid sequence, 152 residues long: FMN reductase (NADH) RutF (152 aa).

Belongs to the non-flavoprotein flavin reductase family. RutF subfamily.

The catalysed reaction is FMNH2 + NAD(+) = FMN + NADH + 2 H(+). Catalyzes the reduction of FMN to FMNH2 which is used to reduce pyrimidine by RutA via the Rut pathway. In Shigella flexneri, this protein is FMN reductase (NADH) RutF.